The chain runs to 107 residues: UPF0145 protein Sfri_2095 (107 aa).

It belongs to the UPF0145 family.

This is UPF0145 protein Sfri_2095 from Shewanella frigidimarina (strain NCIMB 400).